The following is a 468-amino-acid chain: 3-isopropylmalate dehydratase large subunit (468 aa).

[4Fe-4S] cluster-binding residues include Cys-347, Cys-407, and Cys-410. Over residues 424–441 (SASSSNRNFKGRQGSPSG) the composition is skewed to polar residues. A disordered region spans residues 424–443 (SASSSNRNFKGRQGSPSGRT).

The protein belongs to the aconitase/IPM isomerase family. LeuC type 1 subfamily. Heterodimer of LeuC and LeuD. The cofactor is [4Fe-4S] cluster.

It catalyses the reaction (2R,3S)-3-isopropylmalate = (2S)-2-isopropylmalate. It functions in the pathway amino-acid biosynthesis; L-leucine biosynthesis; L-leucine from 3-methyl-2-oxobutanoate: step 2/4. Functionally, catalyzes the isomerization between 2-isopropylmalate and 3-isopropylmalate, via the formation of 2-isopropylmaleate. The sequence is that of 3-isopropylmalate dehydratase large subunit from Prochlorococcus marinus (strain MIT 9215).